Consider the following 94-residue polypeptide: Large ribosomal subunit protein bL25 (94 aa).

Belongs to the bacterial ribosomal protein bL25 family. Part of the 50S ribosomal subunit; part of the 5S rRNA/L5/L18/L25 subcomplex. Contacts the 5S rRNA. Binds to the 5S rRNA independently of L5 and L18.

Functionally, this is one of the proteins that binds to the 5S RNA in the ribosome where it forms part of the central protuberance. The polypeptide is Large ribosomal subunit protein bL25 (Escherichia coli O157:H7).